The chain runs to 547 residues: Chaperonin GroEL (547 aa).

Residues 30-33, K51, 87-91, G415, and D496 contribute to the ATP site; these read TLGP and DGTTT. The disordered stretch occupies residues 525-547; it reads KPEPKSPAGGPGMGGMGGMDGMM. Positions 533–547 are enriched in gly residues; sequence GGPGMGGMGGMDGMM.

Belongs to the chaperonin (HSP60) family. In terms of assembly, forms a cylinder of 14 subunits composed of two heptameric rings stacked back-to-back. Interacts with the co-chaperonin GroES.

It is found in the cytoplasm. The enzyme catalyses ATP + H2O + a folded polypeptide = ADP + phosphate + an unfolded polypeptide.. In terms of biological role, together with its co-chaperonin GroES, plays an essential role in assisting protein folding. The GroEL-GroES system forms a nano-cage that allows encapsulation of the non-native substrate proteins and provides a physical environment optimized to promote and accelerate protein folding. This chain is Chaperonin GroEL, found in Cereibacter sphaeroides (strain ATCC 17029 / ATH 2.4.9) (Rhodobacter sphaeroides).